We begin with the raw amino-acid sequence, 312 residues long: MTSCVAKEPIKKIAIFGGTHGNELTGVFLVTHWLRNGTEVHRAGLDVKPFITNPRAVEKCTRYIDCDLNRVFDLENLSKEMSEDLPYEVRRAQEINHLFGPKNSDDAYDLVFDLHNTTSNMGCTLILEDSRNDFLIQMFHYIKTCMAPLPCSVYLIEHPSLKYATTRSIAKYPVGIEVGPQPHGVLRADILDQMRKMIKHALDFIQHFNEGKEFPPCSIDVYKIMEKVDYPRNESGDMAAVIHPNLQDQDWKPLHPGDPVFVSLDGKVIPLGGDCTVYPVFVNEAAYYEKKEAFAKTTKLTLSAKSIRSTLH.

Positions 20 and 23 each coordinate Zn(2+). N-acetyl-L-aspartate is bound by residues Arg62, Asn69, and Arg70. Residue His115 participates in Zn(2+) binding. N-acetyl-L-aspartate contacts are provided by Tyr163 and Arg167. Glu177 acts as the Proton donor/acceptor in catalysis. Position 287 (Tyr287) interacts with N-acetyl-L-aspartate.

It belongs to the AspA/AstE family. Aspartoacylase subfamily. As to quaternary structure, homodimer. Requires Zn(2+) as cofactor.

Its subcellular location is the cytoplasm. It localises to the nucleus. It carries out the reaction an N-acyl-L-aspartate + H2O = a carboxylate + L-aspartate. It catalyses the reaction N-acetyl-L-aspartate + H2O = L-aspartate + acetate. Functionally, catalyzes the deacetylation of N-acetylaspartic acid (NAA) to produce acetate and L-aspartate. NAA occurs in high concentration in brain and its hydrolysis NAA plays a significant part in the maintenance of intact white matter. In other tissues it acts as a scavenger of NAA from body fluids. In Mus musculus (Mouse), this protein is Aspartoacylase.